The chain runs to 140 residues: MATERTFSILKPDATRRNLTGAVNAVIEEAGLRIVGQRRIRMTKEQAEKFYEVHKERPFFGELVTFMTSGPVVVQVLEGENAVAKYREVMGATNPAQAAEGTIRKKFAESVGENTVHGSDSAENAKLEIAQFFKDSDIAA.

ATP-binding residues include Lys-11, Phe-59, Arg-87, Thr-93, Arg-104, and Asn-114. His-117 acts as the Pros-phosphohistidine intermediate in catalysis.

It belongs to the NDK family. As to quaternary structure, homotetramer. Mg(2+) is required as a cofactor.

It localises to the cytoplasm. It carries out the reaction a 2'-deoxyribonucleoside 5'-diphosphate + ATP = a 2'-deoxyribonucleoside 5'-triphosphate + ADP. The catalysed reaction is a ribonucleoside 5'-diphosphate + ATP = a ribonucleoside 5'-triphosphate + ADP. Functionally, major role in the synthesis of nucleoside triphosphates other than ATP. The ATP gamma phosphate is transferred to the NDP beta phosphate via a ping-pong mechanism, using a phosphorylated active-site intermediate. This chain is Nucleoside diphosphate kinase, found in Methylobacterium radiotolerans (strain ATCC 27329 / DSM 1819 / JCM 2831 / NBRC 15690 / NCIMB 10815 / 0-1).